Reading from the N-terminus, the 164-residue chain is F-box protein At4g05010 (164 aa).

Positions Ser38 to Thr57 are disordered. The F-box domain maps to Arg61–Ser109.

The protein is F-box protein At4g05010 of Arabidopsis thaliana (Mouse-ear cress).